A 619-amino-acid polypeptide reads, in one-letter code: uncharacterized protein (619 aa).

The first 21 residues, 1-21 (MKKLIAIIAVAAVVIAGFVFT), serve as a signal peptide directing secretion.

This is an uncharacterized protein from Archaeoglobus fulgidus (strain ATCC 49558 / DSM 4304 / JCM 9628 / NBRC 100126 / VC-16).